An 878-amino-acid polypeptide reads, in one-letter code: F-box DNA helicase protein 1 (878 aa).

Residues 8-56 enclose the F-box domain; it reads SCKFYRLPLEIIPLICRFLSVQDIQSFIRVFPSFQTILDSSNDLFWKKK.

Belongs to the helicase family. UvrD subfamily. Part of the E3 ubiquitin ligase Skp1-Cullin-1-F-box (SCF) complex. Interacts with skp1 and ssb1. Mg(2+) serves as cofactor. Requires Mn(2+) as cofactor.

It is found in the cytoplasm. Its subcellular location is the nucleus. It carries out the reaction Couples ATP hydrolysis with the unwinding of duplex DNA by translocating in the 3'-5' direction.. It catalyses the reaction ATP + H2O = ADP + phosphate + H(+). It functions in the pathway protein modification; protein ubiquitination. Functionally, involved in ATP-dependent DNA-unwinding in a 3' to 5' direction, and ATP-ase activities stimulated by the single-stranded DNA-binding protein ssb1. Essential for viability and normal growth of stationary phase cells and in the absence of either srs2 or rqh1 DNA helicase. Involved in DNA recombination repair of strand breaks and stalled or collapsed replication forks, on the rhp51-dependent pathway: promotes rhp51 filament dissolution from stalled forks, thereby inhibiting homologous recombination and preventing excessive recombination. Ubiquitination and DNA helicase activities are essential for controlling rhp51-dependent recombination in the absence of rad22. Plays a role in the processing of toxic recombination intermediates. Promotes proper chromosome segregation. The chain is F-box DNA helicase protein 1 (fbh1) from Schizosaccharomyces pombe (strain 972 / ATCC 24843) (Fission yeast).